A 487-amino-acid polypeptide reads, in one-letter code: NAD-dependent histone deacetylase HST3 (487 aa).

Residues 15 to 336 (PADTSIKLHE…FLTQEQLDSE (322 aa)) enclose the Deacetylase sirtuin-type domain. Residues 40–59 (GAGI…DGLY) and 129–132 (QNID) each bind NAD(+). Catalysis depends on His167, which acts as the Proton acceptor. Positions 175, 178, 200, and 203 each coordinate Zn(2+). NAD(+) contacts are provided by residues 261–263 (GTS), 291–293 (NKT), and Cys312. Residues 397–406 (VESVSVKEEP) are compositionally biased toward basic and acidic residues. Residues 397-487 (VESVSVKEEP…ARKGITLDQH (91 aa)) are disordered. A compositionally biased stretch (basic residues) spans 415–425 (HKPKQATKLKR). Over residues 448–459 (DQLSSPASSING) the composition is skewed to polar residues.

It belongs to the sirtuin family. Class I subfamily. It depends on Zn(2+) as a cofactor.

It localises to the cytoplasm. The protein resides in the nucleus. The enzyme catalyses N(6)-acetyl-L-lysyl-[protein] + NAD(+) + H2O = 2''-O-acetyl-ADP-D-ribose + nicotinamide + L-lysyl-[protein]. Its function is as follows. NAD-dependent histone deacetylase, which could function in telomeric silencing, cell cycle progression and chromosome stability. This is NAD-dependent histone deacetylase HST3 (HST3) from Candida albicans (strain SC5314 / ATCC MYA-2876) (Yeast).